Reading from the N-terminus, the 362-residue chain is Glutamate--cysteine ligase (362 aa).

It belongs to the glutamate--cysteine ligase type 2 family. YbdK subfamily.

It carries out the reaction L-cysteine + L-glutamate + ATP = gamma-L-glutamyl-L-cysteine + ADP + phosphate + H(+). In terms of biological role, catalyzes the synthesis of gamma-glutamylcysteine (gamma-GC), the main low-molecular-weight thiol compound instead of glutathione in halophilic archaea. The sequence is that of Glutamate--cysteine ligase from Natronomonas pharaonis (strain ATCC 35678 / DSM 2160 / CIP 103997 / JCM 8858 / NBRC 14720 / NCIMB 2260 / Gabara) (Halobacterium pharaonis).